We begin with the raw amino-acid sequence, 223 residues long: Putative N-acetylmannosamine-6-phosphate 2-epimerase (223 aa).

This sequence belongs to the NanE family.

It catalyses the reaction an N-acyl-D-glucosamine 6-phosphate = an N-acyl-D-mannosamine 6-phosphate. The protein operates within amino-sugar metabolism; N-acetylneuraminate degradation; D-fructose 6-phosphate from N-acetylneuraminate: step 3/5. Its function is as follows. Converts N-acetylmannosamine-6-phosphate (ManNAc-6-P) to N-acetylglucosamine-6-phosphate (GlcNAc-6-P). The sequence is that of Putative N-acetylmannosamine-6-phosphate 2-epimerase from Clostridioides difficile (strain 630) (Peptoclostridium difficile).